Reading from the N-terminus, the 344-residue chain is Ribosomal RNA large subunit methyltransferase Cfr (344 aa).

Glu-90 serves as the catalytic Proton acceptor. Residues Lys-97 to Glu-330 form the Radical SAM core domain. Cys-104 and Cys-335 are joined by a disulfide. Residues Cys-111, Cys-115, and Cys-118 each contribute to the [4Fe-4S] cluster site. S-adenosyl-L-methionine contacts are provided by residues Gly-157–Glu-158, Ser-188, Ser-211–His-213, and Asn-292. Cys-335 acts as the S-methylcysteine intermediate in catalysis.

It belongs to the radical SAM superfamily. RlmN family. Cfr subfamily. [4Fe-4S] cluster serves as cofactor.

It localises to the cytoplasm. It carries out the reaction adenosine(2503) in 23S rRNA + 2 reduced [2Fe-2S]-[ferredoxin] + 2 S-adenosyl-L-methionine = 8-methyladenosine(2503) in 23S rRNA + 5'-deoxyadenosine + L-methionine + 2 oxidized [2Fe-2S]-[ferredoxin] + S-adenosyl-L-homocysteine. In terms of biological role, specifically methylates position 8 of adenine 2503 in 23S rRNA. Confers resistance to some classes of antibiotics. The polypeptide is Ribosomal RNA large subunit methyltransferase Cfr (Clostridium botulinum (strain Langeland / NCTC 10281 / Type F)).